The following is a 221-amino-acid chain: Enolase-phosphatase E1 (221 aa).

This sequence belongs to the HAD-like hydrolase superfamily. MasA/MtnC family. As to quaternary structure, monomer. The cofactor is Mg(2+).

The enzyme catalyses 5-methylsulfanyl-2,3-dioxopentyl phosphate + H2O = 1,2-dihydroxy-5-(methylsulfanyl)pent-1-en-3-one + phosphate. It functions in the pathway amino-acid biosynthesis; L-methionine biosynthesis via salvage pathway; L-methionine from S-methyl-5-thio-alpha-D-ribose 1-phosphate: step 3/6. It participates in amino-acid biosynthesis; L-methionine biosynthesis via salvage pathway; L-methionine from S-methyl-5-thio-alpha-D-ribose 1-phosphate: step 4/6. In terms of biological role, bifunctional enzyme that catalyzes the enolization of 2,3-diketo-5-methylthiopentyl-1-phosphate (DK-MTP-1-P) into the intermediate 2-hydroxy-3-keto-5-methylthiopentenyl-1-phosphate (HK-MTPenyl-1-P), which is then dephosphorylated to form the acireductone 1,2-dihydroxy-3-keto-5-methylthiopentene (DHK-MTPene). The chain is Enolase-phosphatase E1 from Xanthobacter autotrophicus (strain ATCC BAA-1158 / Py2).